The chain runs to 217 residues: Magnetosome protein MamA (217 aa).

TPR repeat units follow at residues 12-44, 46-79, 80-113, 114-147, 148-181, and 182-215; these read VTLY…NDDI, QVYY…DAFD, VDVA…APDN, VKVA…NPIN, FNVR…RPNE, and GKVH…DEGA. The tract at residues 41 to 112 is N-terminal domain (NTD); the sequence is NDDIRQVYYR…LERSLADAPD (72 aa). The segment at 113–217 is C-terminal domain (CTD); it reads NVKVATVLGL…ANELDEGASV (105 aa).

The protein belongs to the magnetosome MamA family. As to quaternary structure, oligomerizes into high molecular weight complexes (at least 560 kDa). Forms round, 20 nm diameter complexes with a central cavity. Interacts with full-length Mms6. Probably binds MamC.

It localises to the magnetosome membrane. Probably forms a large homooligomer on which other magnetosome subunits assemble. Required for formation of functional magnetosomes from pre-existing vesicles, it has a dynamic location in the cell. The protein is Magnetosome protein MamA of Paramagnetospirillum magneticum (strain ATCC 700264 / AMB-1) (Magnetospirillum magneticum).